A 207-amino-acid polypeptide reads, in one-letter code: Ras-related protein rab7 (207 aa).

GTP is bound by residues 15 to 22 (GDSGVGKT), 34 to 40 (SNQYKAT), 63 to 67 (DTAGQ), 125 to 128 (NKID), and 156 to 157 (AK). The Effector region signature appears at 37–45 (YKATIGADF). S-geranylgeranyl cysteine attachment occurs at residues Cys205 and Cys207. Cys207 bears the Cysteine methyl ester mark.

This sequence belongs to the small GTPase superfamily. Rab family. (Microbial infection) Interacts with Singapore grouper iridoviral proteins VP69 (ORF69) and VP101 (ORF101). As to expression, ubiquitously expressed. Expressed in liver, spleen, kidney, brain, intestine, heart, skin, muscle, gill and stomach.

Its subcellular location is the late endosome membrane. The protein resides in the lysosome membrane. Its function is as follows. Key regulator in endo-lysosomal trafficking. Governs early-to-late endosomal maturation, microtubule minus-end as well as plus-end directed endosomal migration and positioning, and endosome-lysosome transport through different protein-protein interaction cascades. Plays important roles in microbial pathogen infection and survival, as well as in participating in the life cycle of viruses. The protein is Ras-related protein rab7 of Epinephelus coioides (Orange-spotted grouper).